The following is a 311-amino-acid chain: Regulator of rDNA transcription protein 6 (311 aa).

2 helical membrane passes run 32-52 and 271-291; these read PHLL…SAEL and YLIV…IIVT.

The protein localises to the membrane. May be involved in the modulation of rDNA transcription. The sequence is that of Regulator of rDNA transcription protein 6 (RRT6) from Saccharomyces cerevisiae (strain ATCC 204508 / S288c) (Baker's yeast).